Reading from the N-terminus, the 331-residue chain is Ketol-acid reductoisomerase (NADP(+)) (331 aa).

A KARI N-terminal Rossmann domain is found at 2-182 (ARLYYDADAN…GGTRAGILET (181 aa)). NADP(+) contacts are provided by residues 25–28 (YGSQ), Ser-51, Ser-53, and 83–86 (DEVQ). The active site involves His-108. An NADP(+)-binding site is contributed by Gly-134. The region spanning 183–328 (TFREETETDL…KDLRAMFSWL (146 aa)) is the KARI C-terminal knotted domain. Mg(2+) is bound by residues Asp-191, Glu-195, Glu-227, and Glu-231. Ser-252 lines the substrate pocket.

The protein belongs to the ketol-acid reductoisomerase family. It depends on Mg(2+) as a cofactor.

The enzyme catalyses (2R)-2,3-dihydroxy-3-methylbutanoate + NADP(+) = (2S)-2-acetolactate + NADPH + H(+). The catalysed reaction is (2R,3R)-2,3-dihydroxy-3-methylpentanoate + NADP(+) = (S)-2-ethyl-2-hydroxy-3-oxobutanoate + NADPH + H(+). Its pathway is amino-acid biosynthesis; L-isoleucine biosynthesis; L-isoleucine from 2-oxobutanoate: step 2/4. It functions in the pathway amino-acid biosynthesis; L-valine biosynthesis; L-valine from pyruvate: step 2/4. Its function is as follows. Involved in the biosynthesis of branched-chain amino acids (BCAA). Catalyzes an alkyl-migration followed by a ketol-acid reduction of (S)-2-acetolactate (S2AL) to yield (R)-2,3-dihydroxy-isovalerate. In the isomerase reaction, S2AL is rearranged via a Mg-dependent methyl migration to produce 3-hydroxy-3-methyl-2-ketobutyrate (HMKB). In the reductase reaction, this 2-ketoacid undergoes a metal-dependent reduction by NADPH to yield (R)-2,3-dihydroxy-isovalerate. The chain is Ketol-acid reductoisomerase (NADP(+)) from Cyanothece sp. (strain PCC 7425 / ATCC 29141).